Reading from the N-terminus, the 848-residue chain is MSNWKTLLLRIGEKGPEYGTSSDYKDHIETCFGVIRREIERSGDQVLPFLLQCAEQLPHKIPLYGTLIGLLNLENEDFVQKLVESVHANFQVALDSGNCNSIRILLRFMTSLLCSKVIQPASLIVVFETLLSSAATTVDEEKGNPSWQPQADFYVICILSSLPWGGSELAEQVPDEIERVLVGIQAYLSIRKNSSTSGLNFFHNGEFESSLAEKDFVEDLLDRIQSLASNGWKLESVPRPHLSFEAQLVAGKFHELRPIKCMEQPSPPSDHSRAYSGKQKHDALTRYPQRIRRLNIFPANKMEDVQPIDRFVVEEYLLDVLFYLNGCRKECASYMANLPVTFRYEYLMAETLFSQILLLPQPPFKTLYYTLVIMDLCKALPGAFPAVVAGAVRALFEKISDLDMESRTRLILWFSHHLSNFQFIWPWEEWAFVLDLPKWAPKRVFVQEILQREVRLSYWDKIKQSIENATALEELLPPKAGPNFMYSLEEGKEKTEEQQLSAELSRKVKEKQTARDMIVWIEETIYPVHGFEVTLTIVVQTLLDIGSKSFTHLVTVLERYGQVFSKLCPDNDKQVMLLSQVSTYWKNNVQMTAVAIDRMMGYRLVSNQAIVRWVFSPENVDQFHVSDQPWEILGNALNKTYNRISDLRKDISNITKNVLVAEKASANARVELEAAESKLSLVEGEPVLGENPAKMKRLKSTVEKTGEAELSLRESLEAKEALLNRALSETEVLLLLLFQSFLGVLKERLPDPTKVRSVQDLKSIGAEDDKPSAMDVDSENGNPKKSCEVGEREQWCLSTLGYLTAFTRQYASEIWPHMEKLESEVFSGEDVHPLFLQAISSALQFPLH.

One can recognise an MIF4G domain in the interval 8–228 (LLRIGEKGPE…DLLDRIQSLA (221 aa)). Positions 767-786 (EDDKPSAMDVDSENGNPKKS) are disordered.

The protein belongs to the NCBP1 family. As to quaternary structure, component of the nuclear cap-binding complex (CBC), a heterodimer composed of ABH1/CBP80 and CBP20 that interacts with m7GpppG-capped RNA. As to expression, expressed in all tissues analyzed, including roots, stems, leaves and flowers.

It localises to the nucleus. The protein localises to the cytoplasm. Its function is as follows. Component of the cap-binding complex (CBC), which binds cotranscriptionally to the 5'-cap of pre-mRNAs and is involved in various processes such as pre-mRNA splicing and RNA-mediated gene silencing (RNAi) by microRNAs (miRNAs). The CBC complex is involved in miRNA-mediated RNA interference and is required for primary miRNA processing. In the CBC complex, ABH1/CBP80 does not bind directly capped RNAs (m7GpppG-capped RNA) but is required to stabilize the movement of the N-terminal loop of CBP20 and lock the CBC into a high affinity cap-binding state with the cap structure. Involved in flowering regulation, possibly by regulating pre-mRNA splicing of FLC gene. Acts as a negative regulator of abscisic acid signaling in guard cells. The chain is Nuclear cap-binding protein subunit 1 (ABH1) from Arabidopsis thaliana (Mouse-ear cress).